The following is a 394-amino-acid chain: NAD(P)H-quinone oxidoreductase subunit H (394 aa).

The protein belongs to the complex I 49 kDa subunit family. NDH-1 can be composed of about 15 different subunits; different subcomplexes with different compositions have been identified which probably have different functions.

The protein resides in the cellular thylakoid membrane. The catalysed reaction is a plastoquinone + NADH + (n+1) H(+)(in) = a plastoquinol + NAD(+) + n H(+)(out). It catalyses the reaction a plastoquinone + NADPH + (n+1) H(+)(in) = a plastoquinol + NADP(+) + n H(+)(out). Functionally, NDH-1 shuttles electrons from an unknown electron donor, via FMN and iron-sulfur (Fe-S) centers, to quinones in the respiratory and/or the photosynthetic chain. The immediate electron acceptor for the enzyme in this species is believed to be plastoquinone. Couples the redox reaction to proton translocation, and thus conserves the redox energy in a proton gradient. Cyanobacterial NDH-1 also plays a role in inorganic carbon-concentration. This Synechococcus sp. (strain CC9902) protein is NAD(P)H-quinone oxidoreductase subunit H.